The sequence spans 180 residues: ATP synthase subunit delta (180 aa).

Belongs to the ATPase delta chain family. In terms of assembly, F-type ATPases have 2 components, F(1) - the catalytic core - and F(0) - the membrane proton channel. F(1) has five subunits: alpha(3), beta(3), gamma(1), delta(1), epsilon(1). F(0) has three main subunits: a(1), b(2) and c(10-14). The alpha and beta chains form an alternating ring which encloses part of the gamma chain. F(1) is attached to F(0) by a central stalk formed by the gamma and epsilon chains, while a peripheral stalk is formed by the delta and b chains.

Its subcellular location is the cell membrane. F(1)F(0) ATP synthase produces ATP from ADP in the presence of a proton or sodium gradient. F-type ATPases consist of two structural domains, F(1) containing the extramembraneous catalytic core and F(0) containing the membrane proton channel, linked together by a central stalk and a peripheral stalk. During catalysis, ATP synthesis in the catalytic domain of F(1) is coupled via a rotary mechanism of the central stalk subunits to proton translocation. Its function is as follows. This protein is part of the stalk that links CF(0) to CF(1). It either transmits conformational changes from CF(0) to CF(1) or is implicated in proton conduction. In Dehalococcoides mccartyi (strain ATCC BAA-2100 / JCM 16839 / KCTC 5957 / BAV1), this protein is ATP synthase subunit delta.